The sequence spans 833 residues: Serine-rich coiled-coil domain-containing protein 2 (833 aa).

The segment at 178–208 is disordered; sequence NRSSGNVQKPRVNSCASRSSSGESLAQSPDN. A compositionally biased stretch (polar residues) spans 191-208; it reads SCASRSSSGESLAQSPDN. Residue serine 222 is modified to Phosphoserine. 4 disordered regions span residues 321 to 345, 424 to 452, 478 to 508, and 602 to 631; these read LLKS…PADM, NRTR…FDSP, KHTS…SSDG, and DHYH…ESPL. Serine 451 carries the phosphoserine modification. Low complexity predominate over residues 496–506; the sequence is SSFELSPSDSS. Residues 606–615 are compositionally biased toward basic residues; sequence LSHPGHYHHH. Positions 711 to 747 form a coiled coil; the sequence is DQIYKNEDLLNEITQLKEEIKKKDEKIQLLEQQLATR. The segment at 789–833 is disordered; sequence FQGMPRTVPPHRRQTSSTTAFQQPSQIYRPRPGKTNKATTYRGPQ. Over residues 803 to 814 the composition is skewed to polar residues; the sequence is TSSTTAFQQPSQ.

It belongs to the CCSER family. In terms of tissue distribution, expressed in brain (at protein level).

Its subcellular location is the cytoplasm. It localises to the cytoskeleton. Functionally, microtubule-binding protein which might play a role in microtubule bundling. The chain is Serine-rich coiled-coil domain-containing protein 2 (Ccser2) from Mus musculus (Mouse).